The primary structure comprises 165 residues: ATP synthase subunit b (165 aa).

A helical membrane pass occupies residues 5–27 (INSTTLGNIIITLGSVFLLYYLI).

This sequence belongs to the ATPase B chain family. F-type ATPases have 2 components, F(1) - the catalytic core - and F(0) - the membrane proton channel. F(1) has five subunits: alpha(3), beta(3), gamma(1), delta(1), epsilon(1). F(0) has three main subunits: a(1), b(2) and c(10-14). The alpha and beta chains form an alternating ring which encloses part of the gamma chain. F(1) is attached to F(0) by a central stalk formed by the gamma and epsilon chains, while a peripheral stalk is formed by the delta and b chains.

It localises to the cell membrane. Its function is as follows. F(1)F(0) ATP synthase produces ATP from ADP in the presence of a proton or sodium gradient. F-type ATPases consist of two structural domains, F(1) containing the extramembraneous catalytic core and F(0) containing the membrane proton channel, linked together by a central stalk and a peripheral stalk. During catalysis, ATP synthesis in the catalytic domain of F(1) is coupled via a rotary mechanism of the central stalk subunits to proton translocation. Component of the F(0) channel, it forms part of the peripheral stalk, linking F(1) to F(0). The chain is ATP synthase subunit b from Streptococcus thermophilus (strain CNRZ 1066).